The sequence spans 46 residues: MQIVEAIYEDGVLKLLKNLKLKEHSKVIIKVIDEEEIEKILDSRDY.

This sequence belongs to the UPF0165 family.

In terms of biological role, possibly the antitoxin component of a type II toxin-antitoxin (TA) system. Its cognate toxin is VapC3 (Potential). The sequence is that of Putative antitoxin VapB3 (vapB3) from Pyrococcus furiosus (strain ATCC 43587 / DSM 3638 / JCM 8422 / Vc1).